A 493-amino-acid polypeptide reads, in one-letter code: Cell division protein FtsA (493 aa).

The tract at residues alanine 434–aspartate 468 is disordered. Residues glutamine 436–alanine 465 show a composition bias toward polar residues.

It belongs to the FtsA/MreB family. As to quaternary structure, self-interacts. Interacts with FtsZ.

It localises to the cell inner membrane. Its function is as follows. Cell division protein that is involved in the assembly of the Z ring. May serve as a membrane anchor for the Z ring. In Helicobacter pylori (strain J99 / ATCC 700824) (Campylobacter pylori J99), this protein is Cell division protein FtsA.